Reading from the N-terminus, the 508-residue chain is Steroid 17-alpha-hydroxylase/17,20 lyase (508 aa).

Residue Cys442 participates in heme binding.

Belongs to the cytochrome P450 family. It depends on heme as a cofactor.

The protein localises to the endoplasmic reticulum membrane. The protein resides in the microsome membrane. The enzyme catalyses a C21-steroid + reduced [NADPH--hemoprotein reductase] + O2 = a 17alpha-hydroxy-C21-steroid + oxidized [NADPH--hemoprotein reductase] + H2O + H(+). It carries out the reaction progesterone + reduced [NADPH--hemoprotein reductase] + O2 = 17alpha-hydroxyprogesterone + oxidized [NADPH--hemoprotein reductase] + H2O + H(+). It catalyses the reaction pregnenolone + reduced [NADPH--hemoprotein reductase] + O2 = 17alpha-hydroxypregnenolone + oxidized [NADPH--hemoprotein reductase] + H2O + H(+). The catalysed reaction is 17alpha-hydroxyprogesterone + reduced [NADPH--hemoprotein reductase] + O2 = androst-4-ene-3,17-dione + acetate + oxidized [NADPH--hemoprotein reductase] + H2O + 2 H(+). The enzyme catalyses 17alpha-hydroxyprogesterone + reduced [NADPH--hemoprotein reductase] + O2 = 16alpha,17alpha-dihydroxyprogesterone + oxidized [NADPH--hemoprotein reductase] + H2O + H(+). It carries out the reaction 16alpha,17alpha-dihydroxyprogesterone + reduced [NADPH--hemoprotein reductase] + O2 = 6beta,16alpha,17alpha-trihydroxyprogesterone + oxidized [NADPH--hemoprotein reductase] + H2O + H(+). It catalyses the reaction 17alpha-hydroxypregnenolone + reduced [NADPH--hemoprotein reductase] + O2 = 3beta-hydroxyandrost-5-en-17-one + acetate + oxidized [NADPH--hemoprotein reductase] + H2O + 2 H(+). The catalysed reaction is 16alpha,17alpha-dihydroxypregnenolone + reduced [NADPH--hemoprotein reductase] + O2 = 3beta,16alpha-dihydroxy-androst-5-en-17-one + acetate + oxidized [NADPH--hemoprotein reductase] + H2O + 2 H(+). The enzyme catalyses 3beta-hydroxyandrost-5-en-17-one + reduced [NADPH--hemoprotein reductase] + O2 = 3beta,16alpha-dihydroxy-androst-5-en-17-one + oxidized [NADPH--hemoprotein reductase] + H2O + H(+). It carries out the reaction androst-4-ene-3,17-dione + reduced [NADPH--hemoprotein reductase] + O2 = 16alpha-hydroxyandrost-4-ene-3,17-dione + oxidized [NADPH--hemoprotein reductase] + H2O + H(+). The protein operates within steroid hormone biosynthesis. It participates in steroid biosynthesis; glucocorticoid biosynthesis. Its activity is regulated as follows. Regulated predominantly by intracellular cAMP levels. The 17,20-lyase activity is stimulated by cytochrome b5, which acts as an allosteric effector increasing the Vmax of the lyase activity. Its function is as follows. A cytochrome P450 monooxygenase involved in corticoid and androgen biosynthesis. Catalyzes 17-alpha hydroxylation of C21 steroids, which is common for both pathways. A second oxidative step, required only for androgen synthesis, involves an acyl-carbon cleavage. The 17-alpha hydroxy intermediates, as part of adrenal glucocorticoids biosynthesis pathway, are precursors of cortisol. Hydroxylates steroid hormones, pregnenolone and progesterone to form 17-alpha hydroxy metabolites, followed by the cleavage of the C17-C20 bond to form C19 steroids, dehydroepiandrosterone (DHEA) and androstenedione. Has 16-alpha hydroxylase activity. Catalyzes 16-alpha hydroxylation of 17-alpha hydroxy pregnenolone, followed by the cleavage of the C17-C20 bond to form 16-alpha-hydroxy DHEA. Also 16-alpha hydroxylates androgens, relevant for estriol synthesis. Mechanistically, uses molecular oxygen inserting one oxygen atom into a substrate, and reducing the second into a water molecule, with two electrons provided by NADPH via cytochrome P450 reductase (CPR; NADPH-ferrihemoprotein reductase). The sequence is that of Steroid 17-alpha-hydroxylase/17,20 lyase (CYP17A1) from Cavia porcellus (Guinea pig).